The following is a 257-amino-acid chain: MVLIRVLANLLILQLSYAQKSSELVTGGHPCNINEHPFLVLVYHDGYQCGGTLINEEWVLTAAHCDGKKMKLQFGLHSKNEPNKDKQTRVPKEKFFCLSSKNFIKWGKDIMLIRLNRPVNNSTHIAPLSLPSSPPSQNTVCNIMGWGTISPTKEIYPDVPHCANINILDHAVCRAFYPGLLEKSKTLCAGILQGGKDICQGDSGGPLICNGQVQGIVSVGGNPCAEPRVPAIYTKVFDHLDWIKSIIAGNTAATCPL.

An N-terminal signal peptide occupies residues Met-1–Ala-18. The propeptide occupies Gln-19–Leu-24. The region spanning Val-25 to Ala-248 is the Peptidase S1 domain. 6 disulfides stabilise this stretch: Cys-31–Cys-162, Cys-49–Cys-65, Cys-97–Cys-255, Cys-141–Cys-209, Cys-173–Cys-188, and Cys-199–Cys-224. Residues His-64 and Asp-109 each act as charge relay system in the active site. N-linked (GlcNAc...) asparagine glycosylation is found at Asn-120 and Asn-121. Ser-203 (charge relay system) is an active-site residue.

Belongs to the peptidase S1 family. Snake venom subfamily. As to quaternary structure, monomer. In terms of tissue distribution, expressed by the venom gland.

The protein resides in the secreted. Snake venom serine protease that may act in the hemostasis system of the prey. The polypeptide is Snake venom serine protease KN11 (Trimeresurus stejnegeri (Chinese green tree viper)).